Reading from the N-terminus, the 191-residue chain is Peptidyl-tRNA hydrolase (191 aa).

Residue Y17 participates in tRNA binding. The active-site Proton acceptor is the H22. TRNA-binding residues include Y68, N70, and N116.

The protein belongs to the PTH family. As to quaternary structure, monomer.

It localises to the cytoplasm. It catalyses the reaction an N-acyl-L-alpha-aminoacyl-tRNA + H2O = an N-acyl-L-amino acid + a tRNA + H(+). Its function is as follows. Hydrolyzes ribosome-free peptidyl-tRNAs (with 1 or more amino acids incorporated), which drop off the ribosome during protein synthesis, or as a result of ribosome stalling. Catalyzes the release of premature peptidyl moieties from peptidyl-tRNA molecules trapped in stalled 50S ribosomal subunits, and thus maintains levels of free tRNAs and 50S ribosomes. The sequence is that of Peptidyl-tRNA hydrolase from Mycobacterium tuberculosis (strain ATCC 25177 / H37Ra).